Consider the following 293-residue polypeptide: Undecaprenyl-diphosphatase (293 aa).

The next 8 helical transmembrane spans lie at 3–23 (IALALKAVILGIVEGLTEFLP), 43–63 (KGKIFEIVIQFGAILAVCWEF), 85–105 (ANVVIASVPAIVLAFIFGKWI), 109–129 (LFNPISVALAFIVGGVVILLA), 178–198 (FALVPGTSRSGATIIGGMLFG), 203–223 (VATEFSFFLAIPVIFGATVYE), 238–258 (IFAVGFVFAFLSAFLCVRWLL), and 269–289 (FAWYRIAFGIVVLLTAYSGLV).

Belongs to the UppP family.

Its subcellular location is the cell inner membrane. It catalyses the reaction di-trans,octa-cis-undecaprenyl diphosphate + H2O = di-trans,octa-cis-undecaprenyl phosphate + phosphate + H(+). Catalyzes the dephosphorylation of undecaprenyl diphosphate (UPP). Confers resistance to bacitracin. This chain is Undecaprenyl-diphosphatase, found in Cupriavidus necator (strain ATCC 17699 / DSM 428 / KCTC 22496 / NCIMB 10442 / H16 / Stanier 337) (Ralstonia eutropha).